Consider the following 182-residue polypeptide: Adenine phosphoribosyltransferase (182 aa).

It belongs to the purine/pyrimidine phosphoribosyltransferase family. In terms of assembly, homodimer.

The protein resides in the cytoplasm. The catalysed reaction is AMP + diphosphate = 5-phospho-alpha-D-ribose 1-diphosphate + adenine. The protein operates within purine metabolism; AMP biosynthesis via salvage pathway; AMP from adenine: step 1/1. Functionally, catalyzes a salvage reaction resulting in the formation of AMP, that is energically less costly than de novo synthesis. The chain is Adenine phosphoribosyltransferase from Pseudomonas entomophila (strain L48).